Reading from the N-terminus, the 209-residue chain is Transmembrane 4 L6 family member 19 (209 aa).

Topologically, residues 1-16 (MVSSPCTQASSRTCSR) are cytoplasmic. A helical transmembrane segment spans residues 17–37 (ILGLSLGTAALFAAGANVALL). Residues 38-59 (LPNWDVTYLLRGLLGRHAMLGT) are Extracellular-facing. The chain crosses the membrane as a helical span at residues 60-80 (GLWGGGLMVLTAAILISLMGW). Residues 81-93 (RYGCFSKSGLCRS) lie on the Cytoplasmic side of the membrane. A helical transmembrane segment spans residues 94–114 (VLTALLSGGLALLGALICFVT). The Extracellular segment spans residues 115-175 (SGVALKDGPF…PSAAVVWHVS (61 aa)). An N-linked (GlcNAc...) asparagine glycan is attached at Asn133. The chain crosses the membrane as a helical span at residues 176-196 (LFSALLCISLLQLLLVVVHVI). Positions 186-196 (LQLLLVVVHVI) are important for homodimerization. Residues 197-209 (NSLLGLFCSLCEK) are Cytoplasmic-facing.

Belongs to the L6 tetraspanin family. In terms of assembly, may form homodimers and homooligomers. Interacts with integrins ITGAV and ITGB3. Interacts with components of members of the V0 complex of vacuolar(H+)-ATPase (V-ATPase), including ATP6V0B and ATP6V0D2; this interaction inhibits V1-V0 complex assembly. As to expression, in adipose tissue, expressed by macrophages.

It localises to the lysosome membrane. Its subcellular location is the cytoplasm. The protein localises to the cytoskeleton. It is found in the cell projection. The protein resides in the filopodium. Its function is as follows. Negatively regulates vacuolar (H+)-ATPase (V-ATPase) activity by interacting with members of V-ATPase V0 complex and hence inhibiting V1-V0 complex assembly. Required for multinucleation during osteoclast differentiation. In Homo sapiens (Human), this protein is Transmembrane 4 L6 family member 19 (TM4SF19).